A 276-amino-acid polypeptide reads, in one-letter code: Diaminopimelate epimerase (276 aa).

Positions 13, 46, and 66 each coordinate substrate. Cys75 (proton donor) is an active-site residue. Residues 76 to 77, Asn159, Asn192, and 210 to 211 each bind substrate; these read GN and ER. Residue Cys219 is the Proton acceptor of the active site. 220–221 provides a ligand contact to substrate; the sequence is GS.

Belongs to the diaminopimelate epimerase family. As to quaternary structure, homodimer.

The protein localises to the cytoplasm. The enzyme catalyses (2S,6S)-2,6-diaminopimelate = meso-2,6-diaminopimelate. The protein operates within amino-acid biosynthesis; L-lysine biosynthesis via DAP pathway; DL-2,6-diaminopimelate from LL-2,6-diaminopimelate: step 1/1. Catalyzes the stereoinversion of LL-2,6-diaminopimelate (L,L-DAP) to meso-diaminopimelate (meso-DAP), a precursor of L-lysine and an essential component of the bacterial peptidoglycan. In Coxiella burnetii (strain CbuK_Q154) (Coxiella burnetii (strain Q154)), this protein is Diaminopimelate epimerase.